Consider the following 192-residue polypeptide: Transposon Tn552 DNA-invertase BinR (192 aa).

The Resolvase/invertase-type recombinase catalytic domain maps to methionine 1–glycine 136. The active-site O-(5'-phospho-DNA)-serine intermediate is the serine 9. The H-T-H motif DNA-binding region spans isoleucine 163 to asparagine 182.

The protein belongs to the site-specific recombinase resolvase family.

In terms of biological role, DNA-invertase, mediating the inversion of inv. This Staphylococcus aureus protein is Transposon Tn552 DNA-invertase BinR (resR).